We begin with the raw amino-acid sequence, 495 residues long: Nuclear receptor subfamily 6 group A member 1 (495 aa).

The disordered stretch occupies residues 1–34; it reads MERDERPPSGGGGGGGSAGFLEPPAALPPPPRNG. Gly residues predominate over residues 9–18; that stretch reads SGGGGGGGSA. The nuclear receptor DNA-binding region spans 72–147; sequence QRTCLICGDR…MGMNRKAIRE (76 aa). Cys-75, Cys-78, Cys-92, Cys-95, Cys-111, Cys-117, Cys-127, and Cys-130 together coordinate Zn(2+). NR C4-type zinc fingers lie at residues 75-95 and 111-135; these read CLIC…CEGC and CSRD…LLKC. 2 disordered regions span residues 145–165 and 177–214; these read IRED…QISE and FEEE…LSSS. Over residues 180–192 the composition is skewed to basic and acidic residues; the sequence is EANHWSNHGDSDH. The sufficient for interaction with UIMC1 stretch occupies residues 187 to 268; sequence HGDSDHSSPG…RSLDPQSYSL (82 aa). The span at 202–214 shows a compositional bias: low complexity; sequence SNQPSPGSTLSSS. In terms of domain architecture, NR LBD spans 264–495; it reads QSYSLIHQLM…HSCKTSTVKE (232 aa).

Belongs to the nuclear hormone receptor family. NR6 subfamily. Homodimer. Interacts with UIMC1. In terms of tissue distribution, expressed in the germ cells of both the adult testis and ovary, being most abundant in spermatids.

The protein resides in the nucleus. Orphan nuclear receptor that binds to a response element containing the sequence 5'-TCAAGGTCA-3'. Acts as a regulator of embryonic stem cell pluripotency by mediating repression of POU5F1/OCT4: binds to the DR0 element within the POU5F1/OCT4 promoter and inhibits POU5F1/OCT4 expression during embryonic stem cell differentiation. Required to restrict POU5F1/OCT4 expression to the germ cell lineage. Involved in the regulation of gene expression in germ cell development during gametogenesis. This chain is Nuclear receptor subfamily 6 group A member 1 (Nr6a1), found in Mus musculus (Mouse).